Reading from the N-terminus, the 104-residue chain is Phosphoribosyl-ATP pyrophosphatase (104 aa).

This sequence belongs to the PRA-PH family.

The protein localises to the cytoplasm. It carries out the reaction 1-(5-phospho-beta-D-ribosyl)-ATP + H2O = 1-(5-phospho-beta-D-ribosyl)-5'-AMP + diphosphate + H(+). The protein operates within amino-acid biosynthesis; L-histidine biosynthesis; L-histidine from 5-phospho-alpha-D-ribose 1-diphosphate: step 2/9. This is Phosphoribosyl-ATP pyrophosphatase from Rhizobium rhizogenes (strain K84 / ATCC BAA-868) (Agrobacterium radiobacter).